Reading from the N-terminus, the 474-residue chain is Trigger factor (474 aa).

One can recognise a PPIase FKBP-type domain in the interval 171-258 (GDVAVIDFQG…LKELKTRDLP (88 aa)). The tract at residues 441–474 (TEVDAASATVETTATETAEEAPEAPKAKKGKKKA) is disordered. Positions 444–456 (DAASATVETTATE) are enriched in low complexity.

The protein belongs to the FKBP-type PPIase family. Tig subfamily.

It localises to the cytoplasm. The catalysed reaction is [protein]-peptidylproline (omega=180) = [protein]-peptidylproline (omega=0). Involved in protein export. Acts as a chaperone by maintaining the newly synthesized protein in an open conformation. Functions as a peptidyl-prolyl cis-trans isomerase. The polypeptide is Trigger factor (Synechococcus sp. (strain ATCC 27144 / PCC 6301 / SAUG 1402/1) (Anacystis nidulans)).